The primary structure comprises 320 residues: Lipoyl synthase (320 aa).

Cysteine 56, cysteine 61, cysteine 67, cysteine 82, cysteine 86, cysteine 89, and serine 295 together coordinate [4Fe-4S] cluster. Positions tryptophan 68–alanine 284 constitute a Radical SAM core domain. The segment at glutamate 300–aspartate 320 is disordered. Over residues alanine 303 to aspartate 320 the composition is skewed to low complexity.

It belongs to the radical SAM superfamily. Lipoyl synthase family. Requires [4Fe-4S] cluster as cofactor.

The protein resides in the cytoplasm. It catalyses the reaction [[Fe-S] cluster scaffold protein carrying a second [4Fe-4S](2+) cluster] + N(6)-octanoyl-L-lysyl-[protein] + 2 oxidized [2Fe-2S]-[ferredoxin] + 2 S-adenosyl-L-methionine + 4 H(+) = [[Fe-S] cluster scaffold protein] + N(6)-[(R)-dihydrolipoyl]-L-lysyl-[protein] + 4 Fe(3+) + 2 hydrogen sulfide + 2 5'-deoxyadenosine + 2 L-methionine + 2 reduced [2Fe-2S]-[ferredoxin]. It participates in protein modification; protein lipoylation via endogenous pathway; protein N(6)-(lipoyl)lysine from octanoyl-[acyl-carrier-protein]: step 2/2. Functionally, catalyzes the radical-mediated insertion of two sulfur atoms into the C-6 and C-8 positions of the octanoyl moiety bound to the lipoyl domains of lipoate-dependent enzymes, thereby converting the octanoylated domains into lipoylated derivatives. In Symbiobacterium thermophilum (strain DSM 24528 / JCM 14929 / IAM 14863 / T), this protein is Lipoyl synthase.